Consider the following 309-residue polypeptide: tRNA hydroxylation protein P2 (309 aa).

It belongs to the peptidase U32 family.

In terms of biological role, involved in prephenate-dependent formation of 5-hydroxyuridine (ho5U) modification at position 34 in tRNAs, the first step in 5-methoxyuridine (mo5U) biosynthesis. The sequence is that of tRNA hydroxylation protein P2 from Bacillus subtilis (strain 168).